The following is a 302-amino-acid chain: 33 kDa chaperonin (302 aa).

Cystine bridges form between Cys247-Cys249 and Cys280-Cys283.

Belongs to the HSP33 family. Under oxidizing conditions two disulfide bonds are formed involving the reactive cysteines. Under reducing conditions zinc is bound to the reactive cysteines and the protein is inactive.

The protein resides in the cytoplasm. Its function is as follows. Redox regulated molecular chaperone. Protects both thermally unfolding and oxidatively damaged proteins from irreversible aggregation. Plays an important role in the bacterial defense system toward oxidative stress. The chain is 33 kDa chaperonin from Prochlorococcus marinus (strain AS9601).